The primary structure comprises 134 residues: Protein PsiB (134 aa).

In terms of biological role, could be involved directly or indirectly in exopolysaccharide synthesis. The polypeptide is Protein PsiB (psiB) (Rhizobium leguminosarum bv. phaseoli).